A 113-amino-acid polypeptide reads, in one-letter code: Large ribosomal subunit protein uL22 (113 aa).

It belongs to the universal ribosomal protein uL22 family. In terms of assembly, part of the 50S ribosomal subunit.

In terms of biological role, this protein binds specifically to 23S rRNA; its binding is stimulated by other ribosomal proteins, e.g. L4, L17, and L20. It is important during the early stages of 50S assembly. It makes multiple contacts with different domains of the 23S rRNA in the assembled 50S subunit and ribosome. The globular domain of the protein is located near the polypeptide exit tunnel on the outside of the subunit, while an extended beta-hairpin is found that lines the wall of the exit tunnel in the center of the 70S ribosome. The chain is Large ribosomal subunit protein uL22 from Halalkalibacterium halodurans (strain ATCC BAA-125 / DSM 18197 / FERM 7344 / JCM 9153 / C-125) (Bacillus halodurans).